Consider the following 360-residue polypeptide: DNA replication and repair protein RecF (360 aa).

33–40 (GENGSGKT) serves as a coordination point for ATP.

The protein belongs to the RecF family.

Its subcellular location is the cytoplasm. The RecF protein is involved in DNA metabolism; it is required for DNA replication and normal SOS inducibility. RecF binds preferentially to single-stranded, linear DNA. It also seems to bind ATP. The chain is DNA replication and repair protein RecF from Rickettsia conorii (strain ATCC VR-613 / Malish 7).